Consider the following 366-residue polypeptide: N-acetyl-L-citrulline deacetylase (366 aa).

Co(2+) contacts are provided by histidine 72 and aspartate 103. Glutamate 130 (proton donor/acceptor) is an active-site residue. A Co(2+)-binding site is contributed by glutamate 155.

It belongs to the peptidase M20A family. N-acetylcitrulline deacetylase subfamily. In terms of assembly, forms homodimers in the crystal, but higher order oligomers may form in solution. Requires Co(2+) as cofactor.

The catalysed reaction is N(2)-acetyl-L-citrulline + H2O = L-citrulline + acetate. It carries out the reaction N(2)-acetyl-L-ornithine + H2O = L-ornithine + acetate. Its pathway is amino-acid biosynthesis; L-arginine biosynthesis. In terms of biological role, catalyzes the deacetylation of N-acetyl-L-citrulline to produce L-citrulline. This is a step in an alternative arginine biosynthesis pathway. Is also able to catalyze the deacetylation of N-acetylornithine in vitro, with almost equal velocity. However, this reaction may be not relevant in vivo since Xanthomonas does not possess the canonical argF gene and cannot convert ornithine to citrulline via ArgF'. The protein is N-acetyl-L-citrulline deacetylase of Xanthomonas campestris pv. campestris (strain ATCC 33913 / DSM 3586 / NCPPB 528 / LMG 568 / P 25).